The chain runs to 121 residues: Large ribosomal subunit protein bL12 (121 aa).

Belongs to the bacterial ribosomal protein bL12 family. In terms of assembly, homodimer. Part of the ribosomal stalk of the 50S ribosomal subunit. Forms a multimeric L10(L12)X complex, where L10 forms an elongated spine to which 2 to 4 L12 dimers bind in a sequential fashion. Binds GTP-bound translation factors.

Forms part of the ribosomal stalk which helps the ribosome interact with GTP-bound translation factors. Is thus essential for accurate translation. This Bacillus pumilus (strain SAFR-032) protein is Large ribosomal subunit protein bL12.